The sequence spans 356 residues: tRNA N6-adenosine threonylcarbamoyltransferase (356 aa).

Fe cation contacts are provided by H115 and H119. Substrate contacts are provided by residues L138–G142, D171, G184, and N283. D311 is a Fe cation binding site.

This sequence belongs to the KAE1 / TsaD family. It depends on Fe(2+) as a cofactor.

The protein resides in the cytoplasm. It carries out the reaction L-threonylcarbamoyladenylate + adenosine(37) in tRNA = N(6)-L-threonylcarbamoyladenosine(37) in tRNA + AMP + H(+). Functionally, required for the formation of a threonylcarbamoyl group on adenosine at position 37 (t(6)A37) in tRNAs that read codons beginning with adenine. Is involved in the transfer of the threonylcarbamoyl moiety of threonylcarbamoyl-AMP (TC-AMP) to the N6 group of A37, together with TsaE and TsaB. TsaD likely plays a direct catalytic role in this reaction. The chain is tRNA N6-adenosine threonylcarbamoyltransferase from Prochlorococcus marinus (strain MIT 9215).